The sequence spans 182 residues: Early nodulin-like protein 10 (182 aa).

An N-terminal signal peptide occupies residues 1 to 20; that stretch reads MSSVMMCCCLLLLFGLLSEG. The region spanning 21–125 is the Phytocyanin domain; sequence REILVGGKSN…GEKLRVVVLS (105 aa). Residue Asn65 is glycosylated (N-linked (GlcNAc...) asparagine). A disulfide bond links Cys79 and Cys113. N-linked (GlcNAc...) asparagine glycosylation is found at Asn129 and Asn148. The GPI-anchor amidated asparagine moiety is linked to residue Asn157. The propeptide at 158 to 182 is removed in mature form; the sequence is AHIMNKGSLNTAWSLLLLLPLGLLV.

The protein belongs to the early nodulin-like (ENODL) family. As to expression, mostly expressed in flowers, and, to a lower extent, in leaves, but barely in seedlings, stems, seeds and roots.

The protein resides in the cell membrane. May act as a carbohydrate transporter. This Arabidopsis thaliana (Mouse-ear cress) protein is Early nodulin-like protein 10.